The primary structure comprises 370 residues: MRPDCTDFRQLFLDDVPMMDMRAPVEFAKGAFPGVVNLPLMNDQERQKVGTCYKQQGQAAAIALGHQLVSGTTKQARMDAWVAFTQANPQGYLYCFRGGLRSQIVQGWLRDEAGIQYPRVKGGYKAMRTFLLETTQQAVAQCDFVLLGGLTGTGKTDVLHQLDNVLDLEGHANHRGSSFGKRATAQPAQIDFENQLAIDVLKKRARGCEQFVLEDEGRIVGSCTVPLELYQGMQQYPLVWLEDSFANRVERILRDYVVNLSAEFIAVHGEEDGRRLFAERMLQSMANIYKRLGGERYQRLSEILRLALEEQQRSGAVDLHRGWIEGLLNEYYDPMYAYQRAAKAERIEFAGDAVEVREYLKARARRQPHH.

The region spanning 12 to 136 (FLDDVPMMDM…MRTFLLETTQ (125 aa)) is the Rhodanese domain. The active-site S-selanylcysteine intermediate is cysteine 95.

Belongs to the SelU family. Monomer.

It catalyses the reaction 5-methylaminomethyl-2-thiouridine(34) in tRNA + selenophosphate + (2E)-geranyl diphosphate + H2O + H(+) = 5-methylaminomethyl-2-selenouridine(34) in tRNA + (2E)-thiogeraniol + phosphate + diphosphate. The enzyme catalyses 5-methylaminomethyl-2-thiouridine(34) in tRNA + (2E)-geranyl diphosphate = 5-methylaminomethyl-S-(2E)-geranyl-thiouridine(34) in tRNA + diphosphate. The catalysed reaction is 5-methylaminomethyl-S-(2E)-geranyl-thiouridine(34) in tRNA + selenophosphate + H(+) = 5-methylaminomethyl-2-(Se-phospho)selenouridine(34) in tRNA + (2E)-thiogeraniol. It carries out the reaction 5-methylaminomethyl-2-(Se-phospho)selenouridine(34) in tRNA + H2O = 5-methylaminomethyl-2-selenouridine(34) in tRNA + phosphate. Involved in the post-transcriptional modification of the uridine at the wobble position (U34) of tRNA(Lys), tRNA(Glu) and tRNA(Gln). Catalyzes the conversion of 2-thiouridine (S2U-RNA) to 2-selenouridine (Se2U-RNA). Acts in a two-step process involving geranylation of 2-thiouridine (S2U) to S-geranyl-2-thiouridine (geS2U) and subsequent selenation of the latter derivative to 2-selenouridine (Se2U) in the tRNA chain. The chain is tRNA 2-selenouridine synthase from Pseudomonas putida (strain GB-1).